Reading from the N-terminus, the 159-residue chain is Ribosomal RNA large subunit methyltransferase H (159 aa).

S-adenosyl-L-methionine contacts are provided by residues Leu-76, Gly-108, and 127–132 (FSKMTL).

Belongs to the RNA methyltransferase RlmH family. Homodimer.

It localises to the cytoplasm. The enzyme catalyses pseudouridine(1915) in 23S rRNA + S-adenosyl-L-methionine = N(3)-methylpseudouridine(1915) in 23S rRNA + S-adenosyl-L-homocysteine + H(+). Specifically methylates the pseudouridine at position 1915 (m3Psi1915) in 23S rRNA. The chain is Ribosomal RNA large subunit methyltransferase H from Bacillus cytotoxicus (strain DSM 22905 / CIP 110041 / 391-98 / NVH 391-98).